We begin with the raw amino-acid sequence, 43 residues long: Holotricin-1 (43 aa).

Intrachain disulfides connect cysteine 3–cysteine 34, cysteine 20–cysteine 39, and cysteine 24–cysteine 41.

The protein belongs to the invertebrate defensin family. Type 1 subfamily. Hemolymph.

The protein resides in the secreted. Functionally, shows potent antibacterial activity against Gram-positive bacteria. This Holotrichia diomphalia (Korean black chafer) protein is Holotricin-1.